A 316-amino-acid chain; its full sequence is L-lactate dehydrogenase 3 (316 aa).

Positions 16, 37, 42, and 68 each coordinate NAD(+). Residue Arg91 participates in substrate binding. NAD(+)-binding positions include Ser104, Ala121 to Asn123, and Thr146. Asn123–Asp126 serves as a coordination point for substrate. Residue Asp151–Arg154 coordinates substrate. Beta-D-fructose 1,6-bisphosphate-binding residues include Arg156 and His171. Catalysis depends on His178, which acts as the Proton acceptor. Thr233 lines the substrate pocket.

The protein belongs to the LDH/MDH superfamily. LDH family. As to quaternary structure, homotetramer.

The protein localises to the cytoplasm. It carries out the reaction (S)-lactate + NAD(+) = pyruvate + NADH + H(+). It functions in the pathway fermentation; pyruvate fermentation to lactate; (S)-lactate from pyruvate: step 1/1. With respect to regulation, allosterically activated by fructose 1,6-bisphosphate (FBP). Its function is as follows. Catalyzes the conversion of lactate to pyruvate. The chain is L-lactate dehydrogenase 3 from Bacillus thuringiensis subsp. konkukian (strain 97-27).